Consider the following 118-residue polypeptide: Large ribosomal subunit protein bL20 (118 aa).

This sequence belongs to the bacterial ribosomal protein bL20 family.

Binds directly to 23S ribosomal RNA and is necessary for the in vitro assembly process of the 50S ribosomal subunit. It is not involved in the protein synthesizing functions of that subunit. The sequence is that of Large ribosomal subunit protein bL20 from Photorhabdus laumondii subsp. laumondii (strain DSM 15139 / CIP 105565 / TT01) (Photorhabdus luminescens subsp. laumondii).